The primary structure comprises 464 residues: Pup--protein ligase (464 aa).

E14 provides a ligand contact to Mg(2+). Position 58 (R58) interacts with ATP. Y60 contributes to the Mg(2+) binding site. D62 acts as the Proton acceptor in catalysis. E68 contacts Mg(2+). Residues T71 and W430 each coordinate ATP.

The protein belongs to the Pup ligase/Pup deamidase family. Pup-conjugating enzyme subfamily.

The catalysed reaction is ATP + [prokaryotic ubiquitin-like protein]-L-glutamate + [protein]-L-lysine = ADP + phosphate + N(6)-([prokaryotic ubiquitin-like protein]-gamma-L-glutamyl)-[protein]-L-lysine.. Its pathway is protein degradation; proteasomal Pup-dependent pathway. It participates in protein modification; protein pupylation. Catalyzes the covalent attachment of the prokaryotic ubiquitin-like protein modifier Pup to the proteasomal substrate proteins, thereby targeting them for proteasomal degradation. This tagging system is termed pupylation. The ligation reaction involves the side-chain carboxylate of the C-terminal glutamate of Pup and the side-chain amino group of a substrate lysine. This Micrococcus luteus (strain ATCC 4698 / DSM 20030 / JCM 1464 / CCM 169 / CCUG 5858 / IAM 1056 / NBRC 3333 / NCIMB 9278 / NCTC 2665 / VKM Ac-2230) (Micrococcus lysodeikticus) protein is Pup--protein ligase.